Reading from the N-terminus, the 568-residue chain is Sulfite reductase [NADPH] hemoprotein beta-component (568 aa).

The [4Fe-4S] cluster site is built by Cys425, Cys431, Cys470, and Cys474. Cys474 is a siroheme binding site.

Belongs to the nitrite and sulfite reductase 4Fe-4S domain family. As to quaternary structure, alpha(8)-beta(8). The alpha component is a flavoprotein, the beta component is a hemoprotein. Siroheme serves as cofactor. [4Fe-4S] cluster is required as a cofactor.

It catalyses the reaction hydrogen sulfide + 3 NADP(+) + 3 H2O = sulfite + 3 NADPH + 4 H(+). The protein operates within sulfur metabolism; hydrogen sulfide biosynthesis; hydrogen sulfide from sulfite (NADPH route): step 1/1. Its function is as follows. Component of the sulfite reductase complex that catalyzes the 6-electron reduction of sulfite to sulfide. This is one of several activities required for the biosynthesis of L-cysteine from sulfate. The protein is Sulfite reductase [NADPH] hemoprotein beta-component of Xanthomonas campestris pv. campestris (strain ATCC 33913 / DSM 3586 / NCPPB 528 / LMG 568 / P 25).